A 450-amino-acid polypeptide reads, in one-letter code: Large terminase protein homolog UL15b (450 aa).

The protein belongs to the herpesviridae large terminase family.

The sequence is that of Large terminase protein homolog UL15b (UL15b) from Psittacid herpesvirus 1 (isolate Amazon parrot/-/97-0001/1997) (PsHV-1).